The sequence spans 459 residues: Zinc finger protein ZPR1 (459 aa).

The span at 1-29 (MSAGGAVEPGLPAAAAAPSAAPARDPGPG) shows a compositional bias: low complexity. The segment at 1 to 43 (MSAGGAVEPGLPAAAAAPSAAPARDPGPGHLFRPISAEDEEQQ) is disordered. C4-type zinc fingers lie at residues 51–83 (CMNC…CEHC) and 259–291 (CPEC…CENC). Residues 438-459 (NEELGLNDMKTEGYETGLPAQR) form a disordered region.

Belongs to the ZPR1 family. In terms of assembly, component of an import snRNP complex composed of KPNB1, SNUPN, SMN1 and ZNF259. Interacts (via C-terminal region) with SMN1 (via C-terminal region); the interaction occurs after treatment with serum. Interacts with elongation factor 1-alpha EEF1A1; the interaction occurs in a epidermal growth factor (EGF)-dependent manner. Interacts (via zinc fingers) with EGFR (via C-terminal cytoplasmic kinase domain); the interaction is negatively regulated in response to epidermal growth factor (EGF) stimulation and EGFR kinase activity. May also bind to the PDGFR receptor.

It is found in the nucleus. It localises to the cytoplasm. The protein localises to the nucleolus. The protein resides in the perinuclear region. Its subcellular location is the gem. It is found in the cajal body. It localises to the cell projection. The protein localises to the axon. The protein resides in the growth cone. Functionally, acts as a signaling molecule that communicates proliferative growth signals from the cytoplasm to the nucleus. Plays a role for the localization and accumulation of the survival motor neuron protein SMN1 in sub-nuclear bodies, including gems and Cajal bodies. Induces neuron differentiation and stimulates axonal growth and formation of growth cone in spinal cord motor neurons. Plays a role in the splicing of cellular pre-mRNAs. May be involved in H(2)O(2)-induced neuronal cell death. The chain is Zinc finger protein ZPR1 (ZNF259) from Bos taurus (Bovine).